Consider the following 655-residue polypeptide: tRNA uridine 5-carboxymethylaminomethyl modification enzyme MnmG (655 aa).

13–18 (GGGHAG) provides a ligand contact to FAD. 281–295 (GPRYCPSVEDKINRF) serves as a coordination point for NAD(+).

The protein belongs to the MnmG family. In terms of assembly, homodimer. Heterotetramer of two MnmE and two MnmG subunits. FAD serves as cofactor.

Its subcellular location is the cytoplasm. NAD-binding protein involved in the addition of a carboxymethylaminomethyl (cmnm) group at the wobble position (U34) of certain tRNAs, forming tRNA-cmnm(5)s(2)U34. In Paracidovorax citrulli (strain AAC00-1) (Acidovorax citrulli), this protein is tRNA uridine 5-carboxymethylaminomethyl modification enzyme MnmG.